Consider the following 312-residue polypeptide: Regulation of nuclear pre-mRNA domain-containing protein 1A (312 aa).

S2 bears the N-acetylserine mark. Positions 2–133 (SAFSEAALEK…QLKHALYGDK (132 aa)) constitute a CID domain. 3 positions are modified to phosphoserine: S153, S156, and S285. The stretch at 244–286 (LADFLRCQKEALAEKEHKLEEYKRKLARVSLVRKELRARIQSL) forms a coiled coil.

This sequence belongs to the UPF0400 (RTT103) family. May form a heterodimer with RPRD1B. Associates with the RNA polymerase II subunit POLR2A (via CTD phosphorylated at 'Ser-2' and 'Ser-7' of the heptad repeats).

The protein localises to the nucleus. Functionally, interacts with phosphorylated C-terminal heptapeptide repeat domain (CTD) of the largest RNA polymerase II subunit POLR2A, and participates in dephosphorylation of the CTD by RPAP2. May act as a negative regulator of cyclin-D1 (CCND1) and cyclin-E (CCNE1) in the cell cycle. This Mus musculus (Mouse) protein is Regulation of nuclear pre-mRNA domain-containing protein 1A (Rprd1a).